A 387-amino-acid chain; its full sequence is Protein kinase gsk3 (387 aa).

Residues 32-316 (YTSSKVVGSG…AAEAMCHPFF (285 aa)) form the Protein kinase domain. ATP contacts are provided by residues 38 to 46 (VGSGSFGVV) and Lys61. Asp157 functions as the Proton acceptor in the catalytic mechanism. Ser191 is modified (phosphoserine). Residue Tyr192 is modified to Phosphotyrosine; by autocatalysis. Ser335 is subject to Phosphoserine.

The protein belongs to the protein kinase superfamily. CMGC Ser/Thr protein kinase family. GSK-3 subfamily. In terms of processing, autophosphorylated on tyrosine residues.

The protein localises to the cytoplasm. Its subcellular location is the nucleus. The catalysed reaction is L-seryl-[protein] + ATP = O-phospho-L-seryl-[protein] + ADP + H(+). It catalyses the reaction L-threonyl-[protein] + ATP = O-phospho-L-threonyl-[protein] + ADP + H(+). In terms of biological role, interacts with cdc14 which is thought to play a role in the initiation and completion of mitosis. Involved in the positive regulation of mis12. The chain is Protein kinase gsk3 (gsk3) from Schizosaccharomyces pombe (strain 972 / ATCC 24843) (Fission yeast).